The chain runs to 801 residues: MRTPTLARLPCRAVSGLTRSSARLQSQNFLTRRCASTAVLRSPTLAPAYQSALSKHFQQRRNASSTAAAVLEAAAANPDTLSQEAIIENLDPVEAARLSRVRNIGIAAHIDSGKTTCTERVLFYTGRIKAIHEVRGRDAVGAKMDSMDLEREKGITIQSAATFCDWVKKDAEGKEQKYHLNLIDTPGHIDFTIEVERALRVLDGAVMILCAVSGVQSQTITVDRQMRRYNVPRISFVNKMDRMGANPFKAVDQINKKLKIPAAAVQVPIGAEDEFEGVVDLLRMKAIYNRGPSGEELFETDEIPEKVKALAEERRQMLIETLADVDDEIAEIFLMEEVPTEDQIRQAIRRATINLKFTPVFMGSALANKSVQPMLDGVIDYLPNPSEVQNLALDKKRNEASVKLVPYNSLPMVGLAFKLEESNFGQLTYIRVYQGTLRKGSFVYNARNDKKVKIPRIVRMHSNEMEDVTEVGAGEICAVFGVECASGDTFTDGQLGYTMSSMFVPEPVISLSIKPKNNKDGANFSKAMARFQREDPTFRVTFDAESEQTLISGMGELHLEIYLERMRREYRVDCETGPPQVAYRETLGERVEFDHLLKKQSGGPGDYARVVGWMEPTGNLGENVFEEQIVGGSISEKFLFACEKGFHLSCDKGPLIGHKVLGTKMVINDGATHMTDSSEMAFKNATQQAFRKAFKESNPAVLEPIMKTVVTAPSEFQGDVIALLNKRNATINDSEVGVDEFTVYADCSLNGMFGISSHLRAATQGKGEYTMEFSHYERAPPHLQKDLIAKYQKAQADRHKK.

The N-terminal 62 residues, 1-62 (MRTPTLARLP…LSKHFQQRRN (62 aa)), are a transit peptide targeting the mitochondrion. The 288-residue stretch at 99–386 (SRVRNIGIAA…GVIDYLPNPS (288 aa)) folds into the tr-type G domain. Residues 108–115 (AHIDSGKT), 184–188 (DTPGH), and 238–241 (NKMD) contribute to the GTP site.

The protein belongs to the TRAFAC class translation factor GTPase superfamily. Classic translation factor GTPase family. EF-G/EF-2 subfamily.

Its subcellular location is the mitochondrion. It functions in the pathway protein biosynthesis; polypeptide chain elongation. Functionally, mitochondrial GTPase that catalyzes the GTP-dependent ribosomal translocation step during translation elongation. During this step, the ribosome changes from the pre-translocational (PRE) to the post-translocational (POST) state as the newly formed A-site-bound peptidyl-tRNA and P-site-bound deacylated tRNA move to the P and E sites, respectively. Catalyzes the coordinated movement of the two tRNA molecules, the mRNA and conformational changes in the ribosome. The polypeptide is Elongation factor G, mitochondrial (mef1) (Aspergillus niger (strain ATCC MYA-4892 / CBS 513.88 / FGSC A1513)).